A 137-amino-acid chain; its full sequence is Small ribosomal subunit protein uS11 (137 aa).

Positions 116–137 are disordered; it reads EDVTPIPHDGTRPKGGRRGRRV.

It belongs to the universal ribosomal protein uS11 family. In terms of assembly, part of the 30S ribosomal subunit.

Functionally, located on the platform of the 30S subunit. This is Small ribosomal subunit protein uS11 from Pyrococcus abyssi (strain GE5 / Orsay).